The primary structure comprises 254 residues: Ribonuclease HII (254 aa).

The RNase H type-2 domain occupies 70–254 (QAIAGIDEVG…TFEPIKSMYE (185 aa)). A divalent metal cation is bound by residues Asp76, Glu77, and Asp168.

This sequence belongs to the RNase HII family. Requires Mn(2+) as cofactor. Mg(2+) serves as cofactor.

It is found in the cytoplasm. It catalyses the reaction Endonucleolytic cleavage to 5'-phosphomonoester.. Its function is as follows. Endonuclease that specifically degrades the RNA of RNA-DNA hybrids. The protein is Ribonuclease HII of Streptococcus sanguinis (strain SK36).